The sequence spans 985 residues: Regulator of telomere elongation helicase 1 homolog (985 aa).

The Helicase ATP-binding domain occupies 7–303; the sequence is AGIPVHFPFE…QDMAGDEPKD (297 aa). Residue 42–49 coordinates ATP; that stretch reads SPTGTGKT. [4Fe-4S] cluster contacts are provided by Cys146, Cys164, Cys173, and Cys209. The short motif at 252-255 is the DEAH box element; it reads DEAH. Residues 863–883 form a disordered region; sequence VKIHKRERSSPTAPESSSQVT. Positions 872–882 are enriched in polar residues; sequence SPTAPESSSQV. Thr874 carries the post-translational modification Phosphothreonine.

It belongs to the helicase family. RAD3/XPD subfamily. As to expression, expressed in both male germline and somatic cells (at protein level). Expressed in ovarian germline stem cells (at protein level). Expressed in adult testes (at protein level). Expressed in the germarium including germline stem cells.

It localises to the nucleus. The protein localises to the chromosome. It carries out the reaction ATP + H2O = ADP + phosphate + H(+). Its function is as follows. A probable ATP-dependent DNA helicase implicated in DNA repair and the maintenance of genomic stability. Acts as an anti-recombinase to counteract toxic recombination and limit crossover during meiosis. Regulates meiotic recombination and crossover homeostasis by physically dissociating strand invasion events and thereby promotes noncrossover repair by meiotic synthesis dependent strand annealing (SDSA) as well as disassembly of D loop recombination intermediates. In male germline stem cells (GSCs), plays a role in GSCs maintenance during larval germline development by modulating the expression of genes such as Stat92E and preventing DNA damage-induced checkpoint activation. May play a role in female germline stem cell maintenance. The sequence is that of Regulator of telomere elongation helicase 1 homolog from Drosophila melanogaster (Fruit fly).